Here is a 116-residue protein sequence, read N- to C-terminus: UPF0102 protein Neut_1662 (116 aa).

The protein belongs to the UPF0102 family.

The protein is UPF0102 protein Neut_1662 of Nitrosomonas eutropha (strain DSM 101675 / C91 / Nm57).